A 455-amino-acid polypeptide reads, in one-letter code: Growth/differentiation factor 6 (455 aa).

Residues 1 to 22 form the signal peptide; it reads MDTPRVLLSAVFLISFLWDLPG. Positions 23–335 are excised as a propeptide; that stretch reads FQQASISSSS…LPSPGRRRRR (313 aa). The segment at 29–93 is disordered; sequence SSSSSSAELG…EPPGRGPRVV (65 aa). The segment covering 45–76 has biased composition (basic and acidic residues); sequence SRKEGKMQRAPRDSDAGREGQEPQPRPQDEPR. Over residues 77 to 91 the composition is skewed to low complexity; it reads AQQPRAQEPPGRGPR. Asn114 is a glycosylation site (N-linked (GlcNAc...) asparagine). Disordered regions lie at residues 244–267 and 300–351; these read EAEARARGPQQPPPPDLRSLGFGR and AEAA…KKSR. Over residues 330-351 the composition is skewed to basic residues; sequence GRRRRRTAFASRHGKRHGKKSR. 3 disulfides stabilise this stretch: Cys354/Cys420, Cys383/Cys452, and Cys387/Cys454.

It belongs to the TGF-beta family. Homodimer; disulfide-linked.

It localises to the secreted. Functionally, growth factor that controls proliferation and cellular differentiation in the retina and bone formation. Plays a key role in regulating apoptosis during retinal development. Establishes dorsal-ventral positional information in the retina and controls the formation of the retinotectal map. Required for normal formation of bones and joints in the limbs, skull, digits and axial skeleton. Plays a key role in establishing boundaries between skeletal elements during development. Regulation of GDF6 expression seems to be a mechanism for evolving species-specific changes in skeletal structures. Seems to positively regulate differentiation of chondrogenic tissue through the growth factor receptors subunits BMPR1A, BMPR1B, BMPR2 and ACVR2A, leading to the activation of SMAD1-SMAD5-SMAD8 complex. The regulation of chondrogenic differentiation is inhibited by NOG. Also involved in the induction of adipogenesis from mesenchymal stem cells. This mechanism acts through the growth factor receptors subunits BMPR1A, BMPR2 and ACVR2A and the activation of SMAD1-SMAD5-SMAD8 complex and MAPK14/p38. This chain is Growth/differentiation factor 6 (GDF6), found in Homo sapiens (Human).